The sequence spans 367 residues: RNA-binding protein 48 (367 aa).

Residues 46–124 (QYLLIQGVPA…GLLHVCYAPE (79 aa)) enclose the RRM domain. Over residues 217 to 228 (PVDRASDSSKDG) the composition is skewed to basic and acidic residues. Disordered regions lie at residues 217–243 (PVDR…HNGS), 277–303 (RTTQ…TNPS), and 339–367 (EVIS…RRRI). The segment covering 347–356 (PPEDKPEDVN) has biased composition (basic and acidic residues).

Belongs to the RBM48 family. In terms of assembly, component of the minor spliceosome. Within this complex, interacts with ARMC7 and PRPF8/PRP8.

As a component of the minor spliceosome, involved in the splicing of U12-type introns in pre-mRNAs. In Pongo abelii (Sumatran orangutan), this protein is RNA-binding protein 48 (RBM48).